The primary structure comprises 467 residues: Retinoic acid receptor RXR-alpha (467 aa).

The interval 1–61 is disordered; the sequence is MDTKHFLPLD…LHSPISTLSS (61 aa). Residues 1–139 form a modulating region; it reads MDTKHFLPLD…GNMSSFTKHI (139 aa). Lys-4 is covalently cross-linked (Glycyl lysine isopeptide (Lys-Gly) (interchain with G-Cter in SUMO2)). A phosphoserine mark is found at Ser-22 and Ser-28. Residues 32–55 show a composition bias toward low complexity; that stretch reads PSLHPSLGPGLGSPLGSPGQLHSP. Ser-61 and Ser-75 each carry phosphoserine; by MAPK8 and MAPK9. Residues 79 to 109 form a disordered region; that stretch reads PHSMSVPTTPTLGFETGSPQLNSPMNPVSSS. A compositionally biased stretch (polar residues) spans 83 to 109; it reads SVPTTPTLGFETGSPQLNSPMNPVSSS. Position 87 is a phosphothreonine; by MAPK8 and MAPK9 (Thr-87). Residue Lys-113 forms a Glycyl lysine isopeptide (Lys-Gly) (interchain with G-Cter in SUMO) linkage. Position 134 is a phosphoserine (Ser-134). Residues Cys-140 and Cys-143 each coordinate Zn(2+). The segment at 140-160 adopts an NR C4-type zinc-finger fold; the sequence is CAICGDRSSGKHYGVYSCEGC. The nuclear receptor DNA-binding region spans 140 to 205; that stretch reads CAICGDRSSG…RYQKCLAMGM (66 aa). Position 150 is an N6-acetyllysine (Lys-150). Cys-157 and Cys-160 together coordinate Zn(2+). The segment at 165–170 is nuclear localization signal; sequence KRTVRK. The Zn(2+) site is built by Cys-176, Cys-182, Cys-192, and Cys-195. Residues 176–200 form an NR C4-type zinc finger; sequence CRDNKDCLIDKRQRNRCQYCRYQKC. The segment at 206–229 is hinge; it reads KREAVQEERQRGKDRNENEVESTS. Residues 211–223 are compositionally biased toward basic and acidic residues; it reads QEERQRGKDRNEN. A disordered region spans residues 211-233; that stretch reads QEERQRGKDRNENEVESTSSANE. Residues 232–463 enclose the NR LBD domain; the sequence is NEDMPVEKIL…TFLMEMLEAP (232 aa). Residue Ser-264 is modified to Phosphoserine. The residue at position 265 (Ser-265) is a Phosphoserine; by MAPK8 and MAPK9. Residues Arg-321 and Ala-332 each coordinate 9-cis-retinoate. Positions 321 and 332 each coordinate all-trans-retinoate. The segment at 353-373 is required for nuclear export; that stretch reads RVLTELVSKMRDMQMDKTELG.

The protein belongs to the nuclear hormone receptor family. NR2 subfamily. As to quaternary structure, homodimer. Heterodimer (via C-terminus) with RARA; required for ligand-dependent retinoic acid receptor transcriptional activity; association with RARA is enhanced by pulsatile shear stress. Heterodimer with PPARA (via the leucine-like zipper in the LBD); the interaction is required for PPARA transcriptional activity. Heterodimerizes with PPARG. Heterodimerizes (via NR LBD) with RARB. Heterodimerizes with NR1H4; the heterodimerization enhances the binding affinity for LXXLL motifs from coactivators. Interacts with NCOA3 and NCOA6 coactivators. Interacts with FAM120B. Interacts with coactivator PELP1, SENP6, SFPQ, DNTTIP2 and RNF8. Interacts with PRMT2. Interacts with ASXL1. Interacts with BHLHE40/DEC1, BHLHE41/DEC2, MED1, NCOR1 and NCOR2. Interacts in a ligand-dependent fashion with MED1 and NCOA1. Interacts with VDR. Interacts with EP300; the interaction is decreased by 9-cis retinoic acid. Heterodimer (via C-terminus) with NR4A1 (DNA-binding domain); the interaction is enhanced by 9-cis retinoic acid. NR4A1 competes with EP300 for interaction with RXRA and thereby attenuates EP300 mediated acetylation of RXRA. In the absence of hormonal ligand, interacts with TACC1. Interacts ith IGFBP3. In terms of processing, phosphorylated on serine and threonine residues mainly in the N-terminal modulating domain. Constitutively phosphorylated on Ser-22 in the presence or absence of ligand. Under stress conditions, hyperphosphorylated by activated JNK on Ser-61, Ser-75, Thr-87 and Ser-265. Phosphorylated on Ser-28, in vitro, by PKA. This phosphorylation is required for repression of cAMP-mediated transcriptional activity of RARA. Post-translationally, ubiquitinated by UBR5, leading to its degradation: UBR5 specifically recognizes and binds ligand-bound RXRA when it is not associated with coactivators (NCOAs). In presence of NCOAs, the UBR5-degron is not accessible, preventing its ubiquitination and degradation. Sumoylation negatively regulates transcriptional activity. Desumoylated specifically by SENP6. In terms of processing, acetylated by EP300; acetylation enhances DNA binding and transcriptional activity. In terms of tissue distribution, expressed in the adrenal gland with main expression in the zona fasciculata and medulla (at protein level). Expressed in aortic endothelial cells, with high expression in the descending thoracic aorta and the outer curvature of the aortic arch, where pulsatory shear stress exists, but very low in the inner curvature of the aortic arch, where oscillatory shear stress prevails (at protein level).

The protein resides in the nucleus. It localises to the cytoplasm. Its subcellular location is the mitochondrion. Its function is as follows. Receptor for retinoic acid that acts as a transcription factor. Forms homo- or heterodimers with retinoic acid receptors (RARs) and binds to target response elements in response to their ligands, all-trans or 9-cis retinoic acid, to regulate gene expression in various biological processes. The RAR/RXR heterodimers bind to the retinoic acid response elements (RARE) composed of tandem 5'-AGGTCA-3' sites known as DR1-DR5 to regulate transcription. The high affinity ligand for retinoid X receptors (RXRs) is 9-cis retinoic acid. In the absence of ligand, the RXR-RAR heterodimers associate with a multiprotein complex containing transcription corepressors that induce histone deacetylation, chromatin condensation and transcriptional suppression. On ligand binding, the corepressors dissociate from the receptors and coactivators are recruited leading to transcriptional activation. Serves as a common heterodimeric partner for a number of nuclear receptors, such as RARA, RARB and PPARA. The RXRA/RARB heterodimer can act as a transcriptional repressor or transcriptional activator, depending on the RARE DNA element context. The RXRA/PPARA heterodimer is required for PPARA transcriptional activity on fatty acid oxidation genes such as ACOX1 and the P450 system genes. Together with RARA, positively regulates microRNA-10a expression, thereby inhibiting the GATA6/VCAM1 signaling response to pulsatile shear stress in vascular endothelial cells. Acts as an enhancer of RARA binding to RARE DNA element. May facilitate the nuclear import of heterodimerization partners such as VDR and NR4A1. Promotes myelin debris phagocytosis and remyelination by macrophages. Plays a role in the attenuation of the innate immune system in response to viral infections, possibly by negatively regulating the transcription of antiviral genes such as type I IFN genes. Involved in the regulation of calcium signaling by repressing ITPR2 gene expression, thereby controlling cellular senescence. This is Retinoic acid receptor RXR-alpha (Rxra) from Rattus norvegicus (Rat).